We begin with the raw amino-acid sequence, 130 residues long: MSKKVVEVKTLKVGKYVIIDGEASKITNISTSSPGKHGSAKARVEAVGIFDNQKRSFVKPVDSKVDIPIIDKRTAQVIAIMGGDVQLMDLETYETFETPIPDELSEQLVEGVEVEYIEALGQRKLMRTKG.

A Hypusine modification is found at Lys-36.

It belongs to the eIF-5A family.

Its subcellular location is the cytoplasm. In terms of biological role, functions by promoting the formation of the first peptide bond. The polypeptide is Translation initiation factor 5A (eif5a) (Methanothermobacter thermautotrophicus (strain ATCC 29096 / DSM 1053 / JCM 10044 / NBRC 100330 / Delta H) (Methanobacterium thermoautotrophicum)).